The sequence spans 915 residues: Metabotropic glutamate receptor 7 (915 aa).

The N-terminal stretch at 1 to 34 is a signal peptide; sequence MVQLGKLLRVLTLMKFPCCVLEVLLCVLAAAARG. The Extracellular segment spans residues 35–590; that stretch reads QEMYAPHSIR…IIKLEWHSPW (556 aa). A disulfide bridge links Cys67 with Cys109. The N-linked (GlcNAc...) asparagine glycan is linked to Asn98. L-glutamate contacts are provided by residues Ser159, 180-182, Tyr230, and Asp314; that span reads AST. Intrachain disulfides connect Cys249-Cys541, Cys374-Cys390, Cys430-Cys437, Cys523-Cys542, Cys527-Cys545, Cys548-Cys560, and Cys563-Cys576. Lys407 lines the L-glutamate pocket. Residues Asn458 and Asn486 are each glycosylated (N-linked (GlcNAc...) asparagine). Asn572 carries an N-linked (GlcNAc...) asparagine glycan. Residues 591–615 form a helical membrane-spanning segment; sequence AVIPVFLAMLGIIATIFVMATFIRY. Residues 616–627 are Cytoplasmic-facing; it reads NDTPIVRASGRE. Residues 628–648 form a helical membrane-spanning segment; the sequence is LSYVLLTGIFLCYIITFLMIA. Residues 649-654 are Extracellular-facing; it reads KPDVAV. Residues 655 to 675 form a helical membrane-spanning segment; sequence CSFRRVFLGLGMCISYAALLT. The Cytoplasmic segment spans residues 676–702; that stretch reads KTNRIYRIFEQGKKSVTAPRLISPTSQ. The helical transmembrane segment at 703–723 threads the bilayer; it reads LAITSSLISVQLLGVFIWFGV. Residues 724–753 are Extracellular-facing; sequence DPPNIIIDYDEHKTMNPEQARGVLKCDITD. The chain crosses the membrane as a helical span at residues 754-775; the sequence is LQIICSLGYSILLMVTCTVYAI. The Cytoplasmic segment spans residues 776 to 788; the sequence is KTRGVPENFNEAK. The chain crosses the membrane as a helical span at residues 789–810; that stretch reads PIGFTMYTTCIVWLAFIPIFFG. Over 811 to 825 the chain is Extracellular; it reads TAQSAEKLYIQTTTL. The chain crosses the membrane as a helical span at residues 826–850; that stretch reads TISMNLSASVALGMLYMPKVYIIIF. Topologically, residues 851–915 are cytoplasmic; the sequence is HPELNVQKRK…KYVSYNNLVI (65 aa). Residues 874 to 895 are disordered; sequence SRLSHKPSDRPNGEAKTELCEN. Basic and acidic residues predominate over residues 879-892; it reads KPSDRPNGEAKTEL. Ser900 is modified (phosphoserine).

The protein belongs to the G-protein coupled receptor 3 family. Homodimer. Interacts with PICK1. Widely distributed throughout the brain.

The protein localises to the cell membrane. In terms of biological role, G-protein coupled receptor activated by glutamate that regulates axon outgrowth through the MAPK-cAMP-PKA signaling pathway during neuronal development. Ligand binding causes a conformation change that triggers signaling via guanine nucleotide-binding proteins (G proteins) and modulates the activity of downstream effectors, such as adenylate cyclase that it inhibits. This Rattus norvegicus (Rat) protein is Metabotropic glutamate receptor 7 (Grm7).